A 174-amino-acid chain; its full sequence is Superoxide dismutase [Cu-Zn] (174 aa).

The N-terminal stretch at 1–20 is a signal peptide; the sequence is MMKSLFIASTMVLMAFPAFA. Residues His-68, His-70, and His-93 each contribute to the Cu cation site. Cys-75 and Cys-170 are disulfide-bonded. Zn(2+) is bound by residues His-93, His-102, His-110, and Asp-113. A Cu cation-binding site is contributed by His-148.

It belongs to the Cu-Zn superoxide dismutase family. As to quaternary structure, homodimer. Requires Cu cation as cofactor. Zn(2+) serves as cofactor.

The protein resides in the periplasm. It carries out the reaction 2 superoxide + 2 H(+) = H2O2 + O2. In terms of biological role, destroys radicals which are normally produced within the cells and which are toxic to biological systems. This is Superoxide dismutase [Cu-Zn] (sodC) from Brucella melitensis biotype 1 (strain ATCC 23456 / CCUG 17765 / NCTC 10094 / 16M).